The sequence spans 347 residues: 5-deoxyribose 1-phosphate isomerase (347 aa).

Substrate-binding positions include 48-50 (RGA), Arg91, and Gln198. The Proton donor role is filled by Asp239. 249 to 250 (NK) is a binding site for substrate.

Belongs to the EIF-2B alpha/beta/delta subunits family. DrdI subfamily.

The catalysed reaction is 5-deoxy-alpha-D-ribose 1-phosphate = 5-deoxy-D-ribulose 1-phosphate. The protein operates within carbohydrate degradation. Functionally, catalyzes the isomerization of 5-deoxy-alpha-D-ribose 1-phosphate to 5-deoxy-D-ribulose 1-phosphate, as part of a 5-deoxyribose salvage pathway that recycles this toxic radical SAM enzyme by-product to mainstream metabolites. This Bacillus thuringiensis (strain Al Hakam) protein is 5-deoxyribose 1-phosphate isomerase.